The chain runs to 421 residues: Testin (421 aa).

One can recognise a PET domain in the interval 92-199; it reads MILTNPVAAK…GDVKLPCEMD (108 aa). Residues 133–164 are disordered; sequence EKQPVAGSEGAQYRKKQLAKQLPAHDQDPSKC. Positions 155–164 are enriched in basic and acidic residues; the sequence is PAHDQDPSKC. 3 consecutive LIM zinc-binding domains span residues 234-297, 299-359, and 362-421; these read YSCY…CDSE, PRCA…NHAV, and QGCH…KMMS.

Belongs to the prickle / espinas / testin family. Interacts via LIM domain 1 with ZYX. Interacts (via LIM domain 3) with ENAH and VASP. Interacts with ALKBH4, talin, actin, alpha-actinin, GRIP1 and PXN. Interacts (via LIM domain 2) with ACTL7A (via N-terminus). Heterodimer with ACTL7A; the heterodimer interacts with ENAH to form a heterotrimer.

Its subcellular location is the cytoplasm. The protein localises to the cell junction. The protein resides in the focal adhesion. Functionally, scaffold protein that may play a role in cell adhesion, cell spreading and in the reorganization of the actin cytoskeleton. Plays a role in the regulation of cell proliferation. May act as a tumor suppressor. The protein is Testin (TES) of Microcebus murinus (Gray mouse lemur).